Consider the following 432-residue polypeptide: EF-hand calcium-binding domain-containing protein 3 (432 aa).

EF-hand domains lie at alanine 45–asparagine 80 and leucine 81–phenylalanine 116. Ca(2+) contacts are provided by aspartate 94, aspartate 96, aspartate 98, lysine 100, and aspartate 105. Phosphotyrosine is present on tyrosine 273. Residues asparagine 394–glutamine 432 form a disordered region. Positions serine 399–leucine 411 are enriched in low complexity. Positions arginine 420–glutamine 432 are enriched in basic residues.

The protein is EF-hand calcium-binding domain-containing protein 3 (Efcab3) of Rattus norvegicus (Rat).